The primary structure comprises 288 residues: Transmembrane and coiled-coil domain-containing protein 5A (288 aa).

Residues 13–105 (IISLNMDLER…VHSISELQRK (93 aa)) are a coiled coil. The chain crosses the membrane as a helical span at residues 227–249 (SLLFSTLFFIRLLGYLIFHLSFI).

Testis-specific. Expressed in spermatogenic cells of testis but disappear by the time mature spermatozoa are formed (at protein level).

The protein resides in the endoplasmic reticulum membrane. It localises to the nucleus membrane. In Rattus norvegicus (Rat), this protein is Transmembrane and coiled-coil domain-containing protein 5A (Tmco5a).